The chain runs to 215 residues: Small ribosomal subunit protein uS7 (215 aa).

The protein belongs to the universal ribosomal protein uS7 family. As to quaternary structure, part of the 30S ribosomal subunit.

In terms of biological role, one of the primary rRNA binding proteins, it binds directly to 16S rRNA where it nucleates assembly of the head domain of the 30S subunit. Is located at the subunit interface close to the decoding center. In Pyrococcus abyssi (strain GE5 / Orsay), this protein is Small ribosomal subunit protein uS7.